A 337-amino-acid polypeptide reads, in one-letter code: D-alanine--D-alanine ligase (337 aa).

The region spanning 124-330 (KMWFSALGIP…FTEYLSLVIN (207 aa)) is the ATP-grasp domain. 154–209 (ALAQWGSIFVKAASQGSSVGCYKVDDSAKVAGVLKDAFGYAPYVIVEKTIKARELE) contributes to the ATP binding site. Positions 284, 297, and 299 each coordinate Mg(2+).

Belongs to the D-alanine--D-alanine ligase family. Mg(2+) serves as cofactor. The cofactor is Mn(2+).

It is found in the cytoplasm. The catalysed reaction is 2 D-alanine + ATP = D-alanyl-D-alanine + ADP + phosphate + H(+). It functions in the pathway cell wall biogenesis; peptidoglycan biosynthesis. Functionally, cell wall formation. The polypeptide is D-alanine--D-alanine ligase (Shewanella baltica (strain OS185)).